The sequence spans 189 residues: Segregation and condensation protein B (189 aa).

This sequence belongs to the ScpB family. Homodimer. Homodimerization may be required to stabilize the binding of ScpA to the Smc head domains. Component of a cohesin-like complex composed of ScpA, ScpB and the Smc homodimer, in which ScpA and ScpB bind to the head domain of Smc. The presence of the three proteins is required for the association of the complex with DNA.

The protein localises to the cytoplasm. Its function is as follows. Participates in chromosomal partition during cell division. May act via the formation of a condensin-like complex containing Smc and ScpA that pull DNA away from mid-cell into both cell halves. This Lachnoclostridium phytofermentans (strain ATCC 700394 / DSM 18823 / ISDg) (Clostridium phytofermentans) protein is Segregation and condensation protein B.